Consider the following 776-residue polypeptide: Protein translocase subunit SecA 2 (776 aa).

ATP-binding positions include glutamine 80, 98-102 (GEGKT), and aspartate 486.

Belongs to the SecA family. As to quaternary structure, monomer and homodimer. Part of the essential Sec protein translocation apparatus which comprises SecA, SecYEG and auxiliary proteins SecDF. Other proteins may also be involved.

The protein resides in the cell membrane. The protein localises to the cytoplasm. It catalyses the reaction ATP + H2O + cellular proteinSide 1 = ADP + phosphate + cellular proteinSide 2.. Part of the Sec protein translocase complex. Interacts with the SecYEG preprotein conducting channel. Has a central role in coupling the hydrolysis of ATP to the transfer of proteins into and across the cell membrane, serving as an ATP-driven molecular motor driving the stepwise translocation of polypeptide chains across the membrane. The protein is Protein translocase subunit SecA 2 of Listeria innocua serovar 6a (strain ATCC BAA-680 / CLIP 11262).